Reading from the N-terminus, the 200-residue chain is Holliday junction resolvase RecU (200 aa).

The interval 1-25 (MTIRYPNGKRYNQASQPHKTPIKKH) is disordered. Mg(2+) contacts are provided by Thr-85, Asp-87, Glu-100, and Gln-119.

This sequence belongs to the RecU family. Mg(2+) serves as cofactor.

It is found in the cytoplasm. The catalysed reaction is Endonucleolytic cleavage at a junction such as a reciprocal single-stranded crossover between two homologous DNA duplexes (Holliday junction).. Its function is as follows. Endonuclease that resolves Holliday junction intermediates in genetic recombination. Cleaves mobile four-strand junctions by introducing symmetrical nicks in paired strands. Promotes annealing of linear ssDNA with homologous dsDNA. Required for DNA repair, homologous recombination and chromosome segregation. This is Holliday junction resolvase RecU from Bacillus thuringiensis (strain Al Hakam).